A 197-amino-acid chain; its full sequence is Protein GrpE (197 aa).

The span at 1–31 shows a compositional bias: basic and acidic residues; it reads MSDDTKKQDTAADAEVEKEMEGVPEHLRDDR. A disordered region spans residues 1–48; the sequence is MSDDTKKQDTAADAEVEKEMEGVPEHLRDDRGSEEDASDDLSAALESL.

The protein belongs to the GrpE family. As to quaternary structure, homodimer.

It is found in the cytoplasm. Participates actively in the response to hyperosmotic and heat shock by preventing the aggregation of stress-denatured proteins, in association with DnaK and GrpE. It is the nucleotide exchange factor for DnaK and may function as a thermosensor. Unfolded proteins bind initially to DnaJ; upon interaction with the DnaJ-bound protein, DnaK hydrolyzes its bound ATP, resulting in the formation of a stable complex. GrpE releases ADP from DnaK; ATP binding to DnaK triggers the release of the substrate protein, thus completing the reaction cycle. Several rounds of ATP-dependent interactions between DnaJ, DnaK and GrpE are required for fully efficient folding. This chain is Protein GrpE, found in Erythrobacter litoralis (strain HTCC2594).